Here is a 540-residue protein sequence, read N- to C-terminus: CTP synthase (540 aa).

Positions 1 to 267 (MKIMKFIFIT…GKLVTKKLNL (267 aa)) are amidoligase domain. Serine 15 provides a ligand contact to CTP. Residue serine 15 participates in UTP binding. Position 16–21 (16–21 (SLGKGI)) interacts with ATP. L-glutamine is bound at residue tyrosine 56. ATP is bound at residue aspartate 73. Positions 73 and 141 each coordinate Mg(2+). Residues 148-150 (DIE), 188-193 (KTKPTQ), and lysine 224 contribute to the CTP site. UTP-binding positions include 188–193 (KTKPTQ) and lysine 224. 240–242 (RDA) contributes to the ATP binding site. In terms of domain architecture, Glutamine amidotransferase type-1 spans 292-540 (TIGIVGKYVE…VRASLGEKIK (249 aa)). Residue glycine 360 participates in L-glutamine binding. Cysteine 387 (nucleophile; for glutamine hydrolysis) is an active-site residue. L-glutamine contacts are provided by residues 388–391 (MGMQ), glutamate 411, and arginine 468. Catalysis depends on residues histidine 513 and glutamate 515.

The protein belongs to the CTP synthase family. In terms of assembly, homotetramer.

It carries out the reaction UTP + L-glutamine + ATP + H2O = CTP + L-glutamate + ADP + phosphate + 2 H(+). The enzyme catalyses L-glutamine + H2O = L-glutamate + NH4(+). The catalysed reaction is UTP + NH4(+) + ATP = CTP + ADP + phosphate + 2 H(+). Its pathway is pyrimidine metabolism; CTP biosynthesis via de novo pathway; CTP from UDP: step 2/2. Its activity is regulated as follows. Allosterically activated by GTP, when glutamine is the substrate; GTP has no effect on the reaction when ammonia is the substrate. The allosteric effector GTP functions by stabilizing the protein conformation that binds the tetrahedral intermediate(s) formed during glutamine hydrolysis. Inhibited by the product CTP, via allosteric rather than competitive inhibition. Its function is as follows. Catalyzes the ATP-dependent amination of UTP to CTP with either L-glutamine or ammonia as the source of nitrogen. Regulates intracellular CTP levels through interactions with the four ribonucleotide triphosphates. In Methanocaldococcus jannaschii (strain ATCC 43067 / DSM 2661 / JAL-1 / JCM 10045 / NBRC 100440) (Methanococcus jannaschii), this protein is CTP synthase.